Reading from the N-terminus, the 42-residue chain is Tachystatin-B2 (42 aa).

3 disulfide bridges follow: cysteine 4/cysteine 20, cysteine 11/cysteine 25, and cysteine 19/cysteine 37.

In terms of tissue distribution, granular hemocytes, small secretory granules.

The protein resides in the secreted. Functionally, exhibits stronger antimicrobial activity against the Gram-positive bacteria (S.aureus (IC(50) is 7.4 ug/ml)) and fungi (C.albicans (IC(50) is 3.0 ug/ml) and P.pastoris (IC(50) is 0.1 ug/ml)) than Gram-negative bacteria (E.coli no inhibition at 100 ug/ml). Binds to chitin (4.3 uM are required to obtain 50% of binding). Does not cause hemolysis on sheep erythrocytes. Has no blocking activity on the P-type calcium channel. The polypeptide is Tachystatin-B2 (Tachypleus tridentatus (Japanese horseshoe crab)).